The sequence spans 254 residues: Urease accessory protein UreD (254 aa).

It belongs to the UreD family. As to quaternary structure, ureD, UreF and UreG form a complex that acts as a GTP-hydrolysis-dependent molecular chaperone, activating the urease apoprotein by helping to assemble the nickel containing metallocenter of UreC. The UreE protein probably delivers the nickel.

It is found in the cytoplasm. In terms of biological role, required for maturation of urease via the functional incorporation of the urease nickel metallocenter. The protein is Urease accessory protein UreD of Streptomyces coelicolor (strain ATCC BAA-471 / A3(2) / M145).